A 1077-amino-acid polypeptide reads, in one-letter code: TSC22 domain family protein 1 (1077 aa).

Positions 1–98 are required for interaction with TGFBR1 and promotion of TGF-beta signaling; it reads MHQPPESTAA…SQAQLQGQPL (98 aa). Disordered stretches follow at residues 22–112, 125–283, 458–492, 842–874, and 909–947; these read MAHP…SGFQ, ISSN…VPSS, QTPT…SVGS, SSAA…GSLV, and QAIG…SDGS. Residues 58 to 70 show a composition bias toward pro residues; sequence FPPPSLLQPPPPA. Low complexity predominate over residues 84-96; it reads SLNLLSQAQLQGQ. Positions 133–142 are enriched in acidic residues; that stretch reads EDTESYDDLD. The segment covering 216 to 240 has biased composition (basic residues); the sequence is HPHHLHHHHHPHHGHHLHHGHHHSS. Serine 263 is modified (phosphoserine). Residues 471–489 show a composition bias toward low complexity; the sequence is TSGSSVSSSVSTLSHYTES. Polar residues predominate over residues 852–874; that stretch reads VPTNLVPPQNIAQPPATQNGSLV. Residues 933 to 947 show a composition bias toward low complexity; it reads MSGDSGGMSAVSDGS. The segment at 1010-1031 is leucine-zipper; that stretch reads LKEQIKELIEKNSQLEQENNLL. The segment at 1042 to 1077 is disordered; that stretch reads QFQAQLQTGSPPATTQPQGTTQPPAQPASQGSGSTA. Residues 1048 to 1077 are compositionally biased toward low complexity; that stretch reads QTGSPPATTQPQGTTQPPAQPASQGSGSTA.

This sequence belongs to the TSC-22/Dip/Bun family. As to quaternary structure, forms homodimers. Forms heterodimers. Component of a complex composed of TSC22D1 (via N-terminus), TGFBR1 and TGFBR2; the interaction between TSC22D1 and TGFBR1 is inhibited by SMAD7 and promoted by TGFB1. Interacts with SMAD7; the interaction requires TGF-beta and the interaction is inhibited by TGFBR1. Interacts with TPT1/fortilin; interaction results in the destabilization of TSC22D1 protein and prevents TSC22D1-mediated apoptosis. Interacts with SMAD4 (via N-terminus). Interacts with ACVRL1/ALK1, ACVR1/ALK2, BMPR1A/ALK3, ACVR1B/ALK4, BMPR1B/ALK6, ACVR2A/ACTRII, and BMPR2. Interacts with SMAD6. Interacts with TFE3; the interaction is enhanced in the presence of TGF-beta. In terms of assembly, forms a heterodimer with TSC22D4/THG1. Forms a heterodimer with TSC22D4/THG1. Interacts with histone H1-2. Interacts with GNL3. Expressed in bone marrow cells (at protein level). Expressed in T-cells. Expressed in the brain. In terms of tissue distribution, expressed in the myoepithelial cells of the mammary gland ducts and alveoli, expression is consistent throughout pregnancy, lactation and involution (at protein level). Expressed in the cortex, medulla and papilla of the kidney. As to expression, expressed in the myoepithelial cells of the mammary gland, expression significantly increases in the secretory luminal epithelium of the mammary gland at the initiation of involution, with levels decreasing from day 3 of involution onwards (at protein level). Expressed in the cortex, medulla and papilla of the kidney.

The protein localises to the cytoplasm. The protein resides in the nucleus. It is found in the cell membrane. Its subcellular location is the mitochondrion. Its function is as follows. Transcriptional repressor. Acts on the C-type natriuretic peptide (CNP) promoter. Acts to promote CASP3-mediated apoptosis. Positively regulates TGF-beta signaling by interacting with SMAD7 which inhibits binding of SMAD7 to TGFBR1, preventing recruitment of SMURF ubiquitin ligases to TGFBR1 and inhibiting SMURF-mediated ubiquitination and degradation of TGFBR1. Contributes to enhancement of TGF-beta signaling by binding to and modulating the transcription activator activity of SMAD4. Promotes TGF-beta-induced transcription of COL1A2; via its interaction with TFE3 at E-boxes in the gene proximal promoter. Plays a role in the repression of hematopoietic precursor cell growth. Promotes IL2 deprivation-induced apoptosis in T-lymphocytes, via repression of TSC22D3/GILZ transcription and activation of the caspase cascade. In terms of biological role, may act to negatively regulate TGFB3 signaling and thereby inhibit cell death in mammary gland cells. Positively regulates cell death in response to TGFB3 during mammary gland involution. This is TSC22 domain family protein 1 from Mus musculus (Mouse).